The chain runs to 129 residues: Large ribosomal subunit protein eL32 (129 aa).

It belongs to the eukaryotic ribosomal protein eL32 family.

The chain is Large ribosomal subunit protein eL32 (rpl32e) from Methanosarcina acetivorans (strain ATCC 35395 / DSM 2834 / JCM 12185 / C2A).